The primary structure comprises 490 residues: Cytochrome P450 monooxygenase anuE (490 aa).

Position 405 (Cys-405) interacts with heme.

Belongs to the cytochrome P450 family. Heme is required as a cofactor.

It carries out the reaction 2-hydroxymethyl-3-pentylphenol + reduced [NADPH--hemoprotein reductase] + O2 = (8S)-annullatin E + oxidized [NADPH--hemoprotein reductase] + H2O + H(+). It participates in secondary metabolite biosynthesis. Cytochrome P450 monooxygenase; part of the gene cluster that mediates the biosynthesis of annullatin D, an alkylated aromatic polyketide with a fused dihydrobenzofuran lactone ring system that exhibits potent agonistic activities toward the cannabinoid receptors. Within the pathway, anuE catalyzes the hydroxylation of 2-hydroxymethyl-3-pentylphenol at the side chain to produce (8S)-annullatin E. The annullatin backbone 2-hydroxymethyl-3-pentylphenol is assembled from one acetyl-CoA starter unit and 5 malonyl-CoA elongation units by cooperation of the highly reducing polyketide synthase anuA, the short-chain dehydrogenase anuB and the oxidoreductase anuC, before being hydroxylated at the C-5 alkyl chain by the cytochrome P450 monooxygenase anuE to form (8S)-annullatin E. The prenyltransferase anuH subsequently installs one isoprenyl group at the benzene ring to form (8S)-annullatin J. Enzymatic or nonenzymatic dihydro-benzofuran ring formation between the prenyl and the phenolic hydroxyl groups in (8S)-annullatin J results in two diastereomers (2S,9S)-annullatin H and compound 12. The intermediate (2S,9S)-annullatin H is then converted to (2S,9S)-annullatin D by the FAD-linked oxidoreductase anuG-catalyzed five-member lactone ring formation. The isomer 12 acts as a substrate for the short-chain dehydrogenase anuF and is oxidized to (2R)-annullatin F, which is subsequently acetylated by an acetyltransferase leading to (2R)-annullatin G formation. The remaining enzymes identified within the cluster, anuD, anuI and anuJ, seem not to be involved in annullatin biosynthesis. This is Cytochrome P450 monooxygenase anuE from Penicillium roqueforti (strain FM164).